Here is an 874-residue protein sequence, read N- to C-terminus: Alanine--tRNA ligase (874 aa).

Zn(2+) is bound by residues His-564, His-568, Cys-665, and His-669.

It belongs to the class-II aminoacyl-tRNA synthetase family. It depends on Zn(2+) as a cofactor.

The protein resides in the cytoplasm. It catalyses the reaction tRNA(Ala) + L-alanine + ATP = L-alanyl-tRNA(Ala) + AMP + diphosphate. Catalyzes the attachment of alanine to tRNA(Ala) in a two-step reaction: alanine is first activated by ATP to form Ala-AMP and then transferred to the acceptor end of tRNA(Ala). Also edits incorrectly charged Ser-tRNA(Ala) and Gly-tRNA(Ala) via its editing domain. The chain is Alanine--tRNA ligase from Burkholderia multivorans (strain ATCC 17616 / 249).